Reading from the N-terminus, the 116-residue chain is Ribonuclease P protein component (116 aa).

Belongs to the RnpA family. Consists of a catalytic RNA component (M1 or rnpB) and a protein subunit.

It carries out the reaction Endonucleolytic cleavage of RNA, removing 5'-extranucleotides from tRNA precursor.. RNaseP catalyzes the removal of the 5'-leader sequence from pre-tRNA to produce the mature 5'-terminus. It can also cleave other RNA substrates such as 4.5S RNA. The protein component plays an auxiliary but essential role in vivo by binding to the 5'-leader sequence and broadening the substrate specificity of the ribozyme. In Lachnoclostridium phytofermentans (strain ATCC 700394 / DSM 18823 / ISDg) (Clostridium phytofermentans), this protein is Ribonuclease P protein component.